A 633-amino-acid chain; its full sequence is Glutamyl-tRNA(Gln) amidotransferase subunit E (633 aa).

Belongs to the GatB/GatE family. GatE subfamily. In terms of assembly, heterodimer of GatD and GatE.

The catalysed reaction is L-glutamyl-tRNA(Gln) + L-glutamine + ATP + H2O = L-glutaminyl-tRNA(Gln) + L-glutamate + ADP + phosphate + H(+). In terms of biological role, allows the formation of correctly charged Gln-tRNA(Gln) through the transamidation of misacylated Glu-tRNA(Gln) in organisms which lack glutaminyl-tRNA synthetase. The reaction takes place in the presence of glutamine and ATP through an activated gamma-phospho-Glu-tRNA(Gln). The GatDE system is specific for glutamate and does not act on aspartate. The polypeptide is Glutamyl-tRNA(Gln) amidotransferase subunit E (Methanococcus vannielii (strain ATCC 35089 / DSM 1224 / JCM 13029 / OCM 148 / SB)).